A 438-amino-acid chain; its full sequence is Gamma-glutamyl phosphate reductase (438 aa).

The protein belongs to the gamma-glutamyl phosphate reductase family.

The protein resides in the cytoplasm. It catalyses the reaction L-glutamate 5-semialdehyde + phosphate + NADP(+) = L-glutamyl 5-phosphate + NADPH + H(+). The protein operates within amino-acid biosynthesis; L-proline biosynthesis; L-glutamate 5-semialdehyde from L-glutamate: step 2/2. In terms of biological role, catalyzes the NADPH-dependent reduction of L-glutamate 5-phosphate into L-glutamate 5-semialdehyde and phosphate. The product spontaneously undergoes cyclization to form 1-pyrroline-5-carboxylate. The chain is Gamma-glutamyl phosphate reductase from Prochlorococcus marinus (strain NATL1A).